A 310-amino-acid polypeptide reads, in one-letter code: Elongation factor Ts (310 aa).

Residues 80–83 (TDFV) are involved in Mg(2+) ion dislocation from EF-Tu.

The protein belongs to the EF-Ts family.

The protein localises to the cytoplasm. In terms of biological role, associates with the EF-Tu.GDP complex and induces the exchange of GDP to GTP. It remains bound to the aminoacyl-tRNA.EF-Tu.GTP complex up to the GTP hydrolysis stage on the ribosome. In Beijerinckia indica subsp. indica (strain ATCC 9039 / DSM 1715 / NCIMB 8712), this protein is Elongation factor Ts.